The primary structure comprises 641 residues: Choline O-acetyltransferase (641 aa).

Ser17 carries the phosphoserine modification. The Proton acceptor role is filled by His335. Ser366 is subject to Phosphoserine. CoA contacts are provided by residues 413 to 425 (GKTF…CSPD), Ser451, and Gln552. The segment at 615 to 641 (CSSRQPADSKPPTAKERARGPSQAKQS) is disordered.

This sequence belongs to the carnitine/choline acetyltransferase family.

It carries out the reaction choline + acetyl-CoA = acetylcholine + CoA. In terms of biological role, catalyzes the reversible synthesis of acetylcholine (ACh) from acetyl CoA and choline at cholinergic synapses. The protein is Choline O-acetyltransferase (Chat) of Mus musculus (Mouse).